A 365-amino-acid polypeptide reads, in one-letter code: Peptide chain release factor 2 (365 aa).

An N5-methylglutamine modification is found at Gln-252.

It belongs to the prokaryotic/mitochondrial release factor family. Methylated by PrmC. Methylation increases the termination efficiency of RF2.

Its subcellular location is the cytoplasm. Peptide chain release factor 2 directs the termination of translation in response to the peptide chain termination codons UGA and UAA. The protein is Peptide chain release factor 2 of Colwellia psychrerythraea (strain 34H / ATCC BAA-681) (Vibrio psychroerythus).